Reading from the N-terminus, the 89-residue chain is Acylphosphatase (89 aa).

The Acylphosphatase-like domain occupies 3–89 (ALFIKISGRV…QNFTSFDIVP (87 aa)). Residues R18 and N36 contribute to the active site.

It belongs to the acylphosphatase family.

It carries out the reaction an acyl phosphate + H2O = a carboxylate + phosphate + H(+). This is Acylphosphatase (acyP) from Pseudothermotoga lettingae (strain ATCC BAA-301 / DSM 14385 / NBRC 107922 / TMO) (Thermotoga lettingae).